A 335-amino-acid chain; its full sequence is Acetyl-coenzyme A carboxylase carboxyl transferase subunit alpha (335 aa).

The CoA carboxyltransferase C-terminal domain occupies 40–294 (QLETLAARRR…KEAIEKHLNA (255 aa)).

It belongs to the AccA family. Acetyl-CoA carboxylase is a heterohexamer composed of biotin carboxyl carrier protein (AccB), biotin carboxylase (AccC) and two subunits each of ACCase subunit alpha (AccA) and ACCase subunit beta (AccD).

The protein resides in the cytoplasm. The enzyme catalyses N(6)-carboxybiotinyl-L-lysyl-[protein] + acetyl-CoA = N(6)-biotinyl-L-lysyl-[protein] + malonyl-CoA. The protein operates within lipid metabolism; malonyl-CoA biosynthesis; malonyl-CoA from acetyl-CoA: step 1/1. Its function is as follows. Component of the acetyl coenzyme A carboxylase (ACC) complex. First, biotin carboxylase catalyzes the carboxylation of biotin on its carrier protein (BCCP) and then the CO(2) group is transferred by the carboxyltransferase to acetyl-CoA to form malonyl-CoA. The protein is Acetyl-coenzyme A carboxylase carboxyl transferase subunit alpha of Prochlorococcus marinus (strain MIT 9301).